The following is a 570-amino-acid chain: Sulfite reductase [NADPH] hemoprotein beta-component (570 aa).

Residues C434, C440, C479, and C483 each contribute to the [4Fe-4S] cluster site. Residue C483 coordinates siroheme.

This sequence belongs to the nitrite and sulfite reductase 4Fe-4S domain family. Alpha(8)-beta(8). The alpha component is a flavoprotein, the beta component is a hemoprotein. Siroheme is required as a cofactor. The cofactor is [4Fe-4S] cluster.

The enzyme catalyses hydrogen sulfide + 3 NADP(+) + 3 H2O = sulfite + 3 NADPH + 4 H(+). It functions in the pathway sulfur metabolism; hydrogen sulfide biosynthesis; hydrogen sulfide from sulfite (NADPH route): step 1/1. In terms of biological role, component of the sulfite reductase complex that catalyzes the 6-electron reduction of sulfite to sulfide. This is one of several activities required for the biosynthesis of L-cysteine from sulfate. The chain is Sulfite reductase [NADPH] hemoprotein beta-component from Salmonella heidelberg (strain SL476).